The chain runs to 506 residues: Nostrin (506 aa).

Positions 1-260 (MRDPLTDCPY…AISKIDIEKD (260 aa)) constitute an F-BAR domain. A Phosphoserine modification is found at serine 114. The stretch at 160-222 (SMTEKEKRKL…LELEKERIQL (63 aa)) forms a coiled coil. Residues 292–372 (AMDKERRKSL…SYKLSSMLAE (81 aa)) enclose the REM-1 domain. One can recognise an SH3 domain in the interval 438 to 497 (LSSRLCKALYSFQARQDDELNLEKGDIVIIHEKKEGGWWFGSLNGKKGHFPAAYVEELPS). Phosphoserine is present on serine 479.

Homotrimer. Interacts with DAB2. Interacts with NOS3, DNM2, WASL and CAV1. Interacts (via SH3 domain) with DNM2; this interaction allows the recruitment of NOS3 to dynamin-positive structures. In terms of tissue distribution, expressed at highest levels in heart, kidney, placenta and lung, and at lowest levels in brain, thymus and spleen. Present in vascular endothelial cells and placenta. Over-expressed in placenta from women with pre-eclampsia (at protein level).

Its subcellular location is the cell membrane. The protein localises to the cytoplasmic vesicle. It localises to the cytoplasm. The protein resides in the cytoskeleton. It is found in the nucleus. In terms of biological role, multivalent adapter protein which may decrease NOS3 activity by inducing its translocation away from the plasma membrane. This is Nostrin from Homo sapiens (Human).